Here is a 46-residue protein sequence, read N- to C-terminus: uncharacterized protein (46 aa).

This is an uncharacterized protein from Haemophilus influenzae (strain ATCC 51907 / DSM 11121 / KW20 / Rd).